Reading from the N-terminus, the 142-residue chain is Small ribosomal subunit protein bS6 (142 aa).

A disordered region spans residues 103-142 (KAAESREQRAPRGEDRPARVVADDVDDSDDDTDDEDSNDE). A compositionally biased stretch (basic and acidic residues) spans 105–124 (AESREQRAPRGEDRPARVVA). A compositionally biased stretch (acidic residues) spans 125 to 142 (DDVDDSDDDTDDEDSNDE).

It belongs to the bacterial ribosomal protein bS6 family.

Functionally, binds together with bS18 to 16S ribosomal RNA. The protein is Small ribosomal subunit protein bS6 of Hahella chejuensis (strain KCTC 2396).